A 578-amino-acid chain; its full sequence is NADPH oxidase 4 (578 aa).

Residues 1–16 (MAVSWRSWLANEGVKH) are Cytoplasmic-facing. A helical membrane pass occupies residues 17-37 (LCLLIWLSLNVLLFWKTFLLY). Topologically, residues 38-62 (NQGPEYYYIHQMLGLGLCLSRASAS) are extracellular. One can recognise a Ferric oxidoreductase domain in the interval 58-303 (RASASVLNLN…YCAERLYRCI (246 aa)). A helical membrane pass occupies residues 63 to 83 (VLNLNCSLILLPMCRTVLAYL). Residues 84-104 (RGSQKVPSRRTRRLLDKSKTL) lie on the Cytoplasmic side of the membrane. A helical transmembrane segment spans residues 105-125 (HITCGVTICIFSGVHVAAHLV). Over 126–154 (NALNFSVNYSEDFLELNAARYQNEDPRKL) the chain is Extracellular. A glycan (N-linked (GlcNAc...) asparagine) is linked at asparagine 133. A helical membrane pass occupies residues 155 to 175 (LFTTIPGLTGVCMVVVLFLMV). Residues 176–188 (TASTYAIRVSNYD) are Cytoplasmic-facing. A helical membrane pass occupies residues 189–209 (IFWYTHNLFFVFYMLLLLHVS). Residues 210–424 (GGLLKYQTNV…SPFEESLNYE (215 aa)) lie on the Extracellular side of the membrane. The segment at 218–273 (NVDTHPPGCISLNQTSSQNMSIPDYVSEHFHGSLPRGFSKLEDRYQKTLVKICLEE) is E-loop; essential for H2O2 generating catalytic activity. N-linked (GlcNAc...) asparagine glycosylation occurs at asparagine 230. The mediates interaction with TLR4 stretch occupies residues 248 to 575 (HGSLPRGFSK…YGTKFEYNKE (328 aa)). Residues 304–419 (RSNKPVTIIS…DGPFGSPFEE (116 aa)) form the FAD-binding FR-type domain. The chain crosses the membrane as a helical span at residues 425–445 (VSLCVAGGIGVTPFASILNTL). Over 446 to 578 (LDDWKPYKLR…KFEYNKESFS (133 aa)) the chain is Cytoplasmic.

Interacts with, relocalizes and stabilizes CYBA/p22phox. Interacts with TLR4. Interacts with protein disulfide isomerase. Interacts with PPP1R15A. Interacts with LRRC8A; this interaction prevents the ubiquitin-mediated degradation of LRRC8A. Heme is required as a cofactor. N-glycosylation is required for the function. In terms of tissue distribution, EXpressed in brain, in all layers of the cerebellum, in pyramidal cells of the Ammon horn and in Purkinje cells (at protein level). Expressed in osteoclasts, leukocytes, kidney, liver and lung.

The protein localises to the cytoplasm. Its subcellular location is the endoplasmic reticulum membrane. It is found in the cell membrane. The protein resides in the cell junction. It localises to the focal adhesion. The protein localises to the nucleus. It catalyses the reaction NADPH + 2 O2 = 2 superoxide + NADP(+) + H(+). The catalysed reaction is NADPH + O2 + H(+) = H2O2 + NADP(+). Its activity is regulated as follows. Activated by insulin. Inhibited by diphenylene iodonium. Inhibited by plumbagin. Activated by phorbol 12-myristate 13-acetate (PMA). In terms of biological role, NADPH oxidase that catalyzes predominantly the reduction of oxygen to H2O2. Can also catalyze to a smaller extent, the reduction of oxygen to superoxide. May function as an oxygen sensor regulating the KCNK3/TASK-1 potassium channel and HIF1A activity. May regulate insulin signaling cascade. May play a role in apoptosis, bone resorption and lipolysaccharide-mediated activation of NFKB. May produce superoxide in the nucleus and play a role in regulating gene expression upon cell stimulation. Promotes ferroptosis, reactive oxygen species production and reduced glutathione (GSH) levels by activating NLRP3 inflammasome activation and cytokine release. The polypeptide is NADPH oxidase 4 (Nox4) (Mus musculus (Mouse)).